The chain runs to 366 residues: Galactoside alpha-(1,2)-fucosyltransferase 1 (366 aa).

Residues 1 to 8 (MWPLSHRH) are Cytoplasmic-facing. Residues 9–25 (LCLAFLLVCVLSAISFF) form a helical; Signal-anchor for type II membrane protein membrane-spanning segment. At 26–366 (LHIHQDSFRH…LSPLWTLAEP (341 aa)) the chain is on the lumenal side. N-linked (GlcNAc...) asparagine glycosylation is found at Asn-66, Asn-302, and Asn-328.

The protein belongs to the glycosyltransferase 11 family.

Its subcellular location is the golgi apparatus. It is found in the golgi stack membrane. The enzyme catalyses a beta-D-galactosyl-(1-&gt;4)-N-acetyl-beta-D-glucosaminyl derivative + GDP-beta-L-fucose = an alpha-L-Fuc-(1-&gt;2)-beta-D-Gal-(1-&gt;4)-beta-D-GlcNAc derivative + GDP + H(+). It carries out the reaction a ganglioside GA1 + GDP-beta-L-fucose = a ganglioside Fuc-GA1 + GDP + H(+). The catalysed reaction is a beta-D-Gal-(1-&gt;3)-beta-D-GlcNAc-(1-&gt;3)-beta-D-Gal-(1-&gt;4)-beta-D-Glc-(1&lt;-&gt;1')-Cer(d18:1(4E)) + GDP-beta-L-fucose = alpha-L-fucosyl-(1-&gt;2)- beta-D-galactosyl-(1-&gt;3)-N-acetyl-beta-D-glucosaminyl-(1-&gt;3)-beta-D-galactosyl-(1-&gt;4)-beta-D-glucosyl-(1&lt;-&gt;1')-N-acylsphing-4-enine + GDP + H(+). It catalyses the reaction a neolactoside nLc4Cer(d18:1(4E)) + GDP-beta-L-fucose = a neolactoside IV(2)-alpha-Fuc-nLc4Cer(d18:1(4E)) + GDP + H(+). The enzyme catalyses a ganglioside GM1 + GDP-beta-L-fucose = a ganglioside Fuc-GM1 + GDP + H(+). It carries out the reaction beta-D-galactosyl-(1-&gt;3)-N-acetyl-D-galactosamine + GDP-beta-L-fucose = alpha-L-fucosyl-(1-&gt;2)-beta-D-galactosyl-(1-&gt;3)-N-acetyl-D-galactosamine + GDP + H(+). Its pathway is protein modification; protein glycosylation. In terms of biological role, catalyzes the transfer of L-fucose, from a guanosine diphosphate-beta-L-fucose, to the terminal galactose residue of glycoconjugates through an alpha(1,2) linkage leading to H antigen synthesis that is an intermediate substrate in the synthesis of ABO blood group antigens. H antigen is essential for maturation of the glomerular layer of the main olfactory bulb, in cell migration and early cell-cell contacts during tumor associated angiogenesis. Preferentially fucosylates soluble lactose and to a lesser extent fucosylates glycolipids gangliosides GA1 and GM1a. This is Galactoside alpha-(1,2)-fucosyltransferase 1 from Plecturocebus brunneus (Brown titi monkey).